The following is a 304-amino-acid chain: tRNA U34 carboxymethyltransferase (304 aa).

Residues Lys-73, Trp-87, Lys-92, Gly-111, 133 to 135, 160 to 161, Tyr-180, and Arg-295 contribute to the carboxy-S-adenosyl-L-methionine site; these read DPS and VE.

Belongs to the class I-like SAM-binding methyltransferase superfamily. CmoB family. In terms of assembly, homotetramer.

It carries out the reaction carboxy-S-adenosyl-L-methionine + 5-hydroxyuridine(34) in tRNA = 5-carboxymethoxyuridine(34) in tRNA + S-adenosyl-L-homocysteine + H(+). Catalyzes carboxymethyl transfer from carboxy-S-adenosyl-L-methionine (Cx-SAM) to 5-hydroxyuridine (ho5U) to form 5-carboxymethoxyuridine (cmo5U) at position 34 in tRNAs. This chain is tRNA U34 carboxymethyltransferase, found in Aliarcobacter butzleri (strain RM4018) (Arcobacter butzleri).